The primary structure comprises 184 residues: C-phycoerythrin class 1 subunit beta (184 aa).

Residues C50 and C61 each coordinate (2R,3E)-phycoerythrobilin. N72 is subject to N4-methylasparagine. Residues C82 and C165 each contribute to the (2R,3E)-phycoerythrobilin site.

The protein belongs to the phycobiliprotein family. Heterodimer of an alpha and a beta chain. Contains three covalently linked bilin chromophores.

The protein resides in the cellular thylakoid membrane. Its function is as follows. Light-harvesting photosynthetic bile pigment-protein from the phycobiliprotein complex. This Synechococcus sp. (strain WH7803) protein is C-phycoerythrin class 1 subunit beta (cpeB).